Reading from the N-terminus, the 317-residue chain is Melanocyte-stimulating hormone receptor (317 aa).

Over 1 to 37 (MPVQGSQRRLLGSLNSTPTATPRLGLAANQTGARCLE) the chain is Extracellular. A glycan (N-linked (GlcNAc...) asparagine) is linked at Asn-29. The chain crosses the membrane as a helical span at residues 38–63 (VSIPDGLFLSLGLVSLVENVLVVVAI). Over 64 to 72 (ARNRNLHSP) the chain is Cytoplasmic. A helical transmembrane segment spans residues 73-93 (MYCFICCLALSDLLVSGSNML). At 94–118 (ETAVFLLLEAGALAARAAVVQQLDN) the chain is on the extracellular side. The helical transmembrane segment at 119–140 (VIDVITCSSMLSSLCFLGAIAV) threads the bilayer. Topologically, residues 141-163 (DRYISIFYALRYHSIVTLRRARR) are cytoplasmic. Residues 164–183 (VVAAIWVASVLFSTLFIAYC) form a helical membrane-spanning segment. Topologically, residues 184–191 (DHAAVLLC) are extracellular. A helical transmembrane segment spans residues 192–211 (LVVFFLAMLVLMAVLYVHML). Residues 212 to 240 (ARACQHAQGIAQLHKRQRPAHQGVGLKGA) lie on the Cytoplasmic side of the membrane. Residues 241–266 (ATLTILLGIFFLCWGPFFLHLTLIVL) traverse the membrane as a helical segment. Topologically, residues 267-279 (CPQHPTCSCIFKN) are extracellular. The chain crosses the membrane as a helical span at residues 280–300 (FNLFLTLIICNAIIDPLIYAF). Residues 301 to 317 (RSQELRRTLKKVLLCSW) are Cytoplasmic-facing. Cys-315 is lipidated: S-palmitoyl cysteine.

This sequence belongs to the G-protein coupled receptor 1 family. As to quaternary structure, interacts with MGRN1, but does not undergo MGRN1-mediated ubiquitination; this interaction competes with GNAS-binding and thus inhibits agonist-induced cAMP production. Interacts with OPN3; the interaction results in a decrease in MC1R-mediated cAMP signaling and ultimately a decrease in melanin production in melanocytes.

It is found in the cell membrane. Receptor for MSH (alpha, beta and gamma) and ACTH. The activity of this receptor is mediated by G proteins which activate adenylate cyclase. Mediates melanogenesis, the production of eumelanin (black/brown) and phaeomelanin (red/yellow), via regulation of cAMP signaling in melanocytes. This chain is Melanocyte-stimulating hormone receptor (MC1R), found in Trachypithecus obscurus (Dusky leaf-monkey).